Consider the following 327-residue polypeptide: GTPase Obg (327 aa).

Residues 1 to 159 (MQFIDQANII…WEVQLELKLL (159 aa)) enclose the Obg domain. Residues 160–327 (AEVGIIGLPN…SLLSEVWKRI (168 aa)) form the OBG-type G domain. ATP contacts are provided by residues 166 to 173 (GLPNAGKS), 191 to 195 (FTTLI), 213 to 216 (DIPG), 280 to 283 (NKME), and 309 to 311 (SSS). S173 and T193 together coordinate Mg(2+).

The protein belongs to the TRAFAC class OBG-HflX-like GTPase superfamily. OBG GTPase family. As to quaternary structure, monomer. It depends on Mg(2+) as a cofactor.

The protein resides in the cytoplasm. An essential GTPase which binds GTP, GDP and possibly (p)ppGpp with moderate affinity, with high nucleotide exchange rates and a fairly low GTP hydrolysis rate. Plays a role in control of the cell cycle, stress response, ribosome biogenesis and in those bacteria that undergo differentiation, in morphogenesis control. This Prochlorococcus marinus (strain MIT 9301) protein is GTPase Obg.